Consider the following 65-residue polypeptide: Toxin KTx8 (65 aa).

Positions 1–25 are cleaved as a signal peptide; sequence MNKVCFVVVLVLFVALAAYVSPIEG. Disulfide bonds link Cys-31–Cys-53, Cys-38–Cys-61, and Cys-42–Cys-63.

It belongs to the short scorpion toxin superfamily. Potassium channel inhibitor family. Alpha-KTx 11 subfamily. Expressed by the venom gland.

It is found in the secreted. This recombinant toxin inhibits the mammalian voltage-gated potassium channels Kv1.3/KCNA3 in vitro with an IC(50) of 26.40 nM. The chain is Toxin KTx8 from Lychas mucronatus (Chinese swimming scorpion).